We begin with the raw amino-acid sequence, 525 residues long: GMP synthase [glutamine-hydrolyzing] (525 aa).

One can recognise a Glutamine amidotransferase type-1 domain in the interval 8–207 (KILILDFGSQ…ALDICGCDAN (200 aa)). Cys-85 functions as the Nucleophile in the catalytic mechanism. Active-site residues include His-181 and Glu-183. Residues 208-400 (WKPSSIIEDA…LGLPYDMLYR (193 aa)) form the GMPS ATP-PPase domain. Residue 235–241 (SGGVDSS) coordinates ATP.

Homodimer.

It carries out the reaction XMP + L-glutamine + ATP + H2O = GMP + L-glutamate + AMP + diphosphate + 2 H(+). It participates in purine metabolism; GMP biosynthesis; GMP from XMP (L-Gln route): step 1/1. Catalyzes the synthesis of GMP from XMP. The sequence is that of GMP synthase [glutamine-hydrolyzing] from Shewanella piezotolerans (strain WP3 / JCM 13877).